The primary structure comprises 376 residues: DNA replication and repair protein RecF (376 aa).

ATP is bound at residue 30 to 37; the sequence is GNNAQGKS.

It belongs to the RecF family.

Its subcellular location is the cytoplasm. Its function is as follows. The RecF protein is involved in DNA metabolism; it is required for DNA replication and normal SOS inducibility. RecF binds preferentially to single-stranded, linear DNA. It also seems to bind ATP. The sequence is that of DNA replication and repair protein RecF from Trichormus variabilis (strain ATCC 29413 / PCC 7937) (Anabaena variabilis).